A 543-amino-acid chain; its full sequence is Chaperonin GroEL 1 (543 aa).

ATP-binding positions include 29–32, 86–90, glycine 413, 479–481, and aspartate 495; these read TLGP, DGTTT, and NAA.

The protein belongs to the chaperonin (HSP60) family. As to quaternary structure, forms a cylinder of 14 subunits composed of two heptameric rings stacked back-to-back. Interacts with the co-chaperonin GroES.

It localises to the cytoplasm. It catalyses the reaction ATP + H2O + a folded polypeptide = ADP + phosphate + an unfolded polypeptide.. Together with its co-chaperonin GroES, plays an essential role in assisting protein folding. The GroEL-GroES system forms a nano-cage that allows encapsulation of the non-native substrate proteins and provides a physical environment optimized to promote and accelerate protein folding. In Prochlorococcus marinus (strain NATL2A), this protein is Chaperonin GroEL 1.